A 941-amino-acid polypeptide reads, in one-letter code: Translation initiation factor IF-2 (941 aa).

A compositionally biased stretch (basic and acidic residues) spans 170-209 (DAQKAEVDAQKAEAEKPVEVKADESAIEEKKRVAAEESKK). Disordered regions lie at residues 170 to 228 (DAQK…KAAA) and 252 to 351 (RAIK…SNFQ). Residues 256–269 (APEPVAPVAKPAAE) are compositionally biased toward low complexity. A compositionally biased stretch (basic and acidic residues) spans 271 to 297 (TLHKPADKKPGEKKDEKKPAVTADKKS). Over residues 299-308 (KSANVSSTWQ) the composition is skewed to polar residues. Residues 441-610 (PRAPVVTVMG…LLQAEVLELK (170 aa)) enclose the tr-type G domain. The G1 stretch occupies residues 450–457 (GHVDHGKT). 450-457 (GHVDHGKT) provides a ligand contact to GTP. Residues 475-479 (GITQH) are G2. A G3 region spans residues 496–499 (DTPG). Residues 496-500 (DTPGH) and 550-553 (NKID) each bind GTP. A G4 region spans residues 550–553 (NKID). The interval 586-588 (SAK) is G5.

Belongs to the TRAFAC class translation factor GTPase superfamily. Classic translation factor GTPase family. IF-2 subfamily.

Its subcellular location is the cytoplasm. Functionally, one of the essential components for the initiation of protein synthesis. Protects formylmethionyl-tRNA from spontaneous hydrolysis and promotes its binding to the 30S ribosomal subunits. Also involved in the hydrolysis of GTP during the formation of the 70S ribosomal complex. The protein is Translation initiation factor IF-2 of Herminiimonas arsenicoxydans.